We begin with the raw amino-acid sequence, 256 residues long: Pro-thyrotropin-releasing hormone (256 aa).

Positions Met-1–Ala-24 are cleaved as a signal peptide. Disordered stretches follow at residues Arg-76–Ser-128 and Val-151–Gly-215. Proline amide occurs at positions 79, 111, 156, and 174. Positions Arg-104–Arg-113 are enriched in basic residues. The segment covering Arg-177–Glu-188 has biased composition (basic and acidic residues). The residue at position 205 (Pro-205) is a Proline amide.

It belongs to the TRH family. Specifically expressed in hypothalamus and testis.

The protein resides in the secreted. Its function is as follows. Functions as a regulator of the biosynthesis of TSH in the anterior pituitary gland and as a neurotransmitter/ neuromodulator in the central and peripheral nervous systems. The chain is Pro-thyrotropin-releasing hormone (Trh) from Mus musculus (Mouse).